Here is a 131-residue protein sequence, read N- to C-terminus: Small ribosomal subunit protein uS8 (131 aa).

The protein belongs to the universal ribosomal protein uS8 family. Part of the 30S ribosomal subunit. Contacts proteins S5 and S12.

Functionally, one of the primary rRNA binding proteins, it binds directly to 16S rRNA central domain where it helps coordinate assembly of the platform of the 30S subunit. In Polaromonas sp. (strain JS666 / ATCC BAA-500), this protein is Small ribosomal subunit protein uS8.